A 433-amino-acid chain; its full sequence is Xylose isomerase (433 aa).

Residues His-97 and Asp-100 contribute to the active site. Mg(2+) contacts are provided by Glu-228, Glu-264, His-267, Asp-292, Asp-303, Asp-305, and Asp-334.

This sequence belongs to the xylose isomerase family. Homotetramer. It depends on Mg(2+) as a cofactor.

The protein resides in the cytoplasm. The catalysed reaction is alpha-D-xylose = alpha-D-xylulofuranose. This is Xylose isomerase from Fervidobacterium gondwanense.